Reading from the N-terminus, the 292-residue chain is F-box only protein 16 (292 aa).

Residues 86–132 (LDFTTKLPRVLSLYIFSFLDPRSLCRCAQVCWHWKNLAELDQLWMLK) enclose the F-box domain. Disordered stretches follow at residues 188-224 (SPEE…SSDK) and 238-292 (RDPM…PLCP). Residues 194-204 (SPLSAFRSSSS) show a composition bias toward low complexity. The span at 260–273 (RQSHDKKNKLQDRT) shows a compositional bias: basic and acidic residues.

In terms of assembly, part of a SCF (SKP1-cullin-F-box) protein ligase complex. As to expression, expressed in heart, spleen and colon.

Functionally, probably recognizes and binds to some phosphorylated proteins and promotes their ubiquitination and degradation. The protein is F-box only protein 16 (FBXO16) of Homo sapiens (Human).